A 154-amino-acid chain; its full sequence is Protein aau3 (154 aa).

The 131-residue stretch at 2–132 (RLTKQTNYAV…QGYTIDDLVK (131 aa)) folds into the HTH rrf2-type domain. Positions 91, 99, and 105 each coordinate [2Fe-2S] cluster.

The cofactor is [2Fe-2S] cluster.

In terms of biological role, required for growth utilizing PHB cycle intermediates. The chain is Protein aau3 (aau3) from Rhizobium meliloti (strain 1021) (Ensifer meliloti).